The chain runs to 275 residues: 4-diphosphocytidyl-2-C-methyl-D-erythritol kinase (275 aa).

Residue Lys15 is part of the active site. 97–107 (PMGSGLGGGSS) is an ATP binding site. The active site involves Asp137.

It belongs to the GHMP kinase family. IspE subfamily.

It catalyses the reaction 4-CDP-2-C-methyl-D-erythritol + ATP = 4-CDP-2-C-methyl-D-erythritol 2-phosphate + ADP + H(+). It functions in the pathway isoprenoid biosynthesis; isopentenyl diphosphate biosynthesis via DXP pathway; isopentenyl diphosphate from 1-deoxy-D-xylulose 5-phosphate: step 3/6. Functionally, catalyzes the phosphorylation of the position 2 hydroxy group of 4-diphosphocytidyl-2C-methyl-D-erythritol. In Pseudothermotoga lettingae (strain ATCC BAA-301 / DSM 14385 / NBRC 107922 / TMO) (Thermotoga lettingae), this protein is 4-diphosphocytidyl-2-C-methyl-D-erythritol kinase.